We begin with the raw amino-acid sequence, 574 residues long: Excitatory amino acid transporter 2 (574 aa).

Over 1–44 the chain is Cytoplasmic; sequence MASTEGANNMPKQVEVRMHDSHLGSEEPKHRHLGLRLCDKLGKN. 3 positions are modified to phosphoserine: S3, S21, and S25. The S-palmitoyl cysteine moiety is linked to residue C38. The helical transmembrane segment at 45-64 threads the bilayer; the sequence is LLLTLTVFGVILGAVCGGLL. The Extracellular portion of the chain corresponds to 65–87; that stretch reads RLASPIHPDVVMLIAFPGDILMR. The chain crosses the membrane as a helical span at residues 88-108; it reads MLKMLILPLIISSLITGLSGL. Residues 109-120 are Cytoplasmic-facing; it reads DAKASGRLGTRA. The helical transmembrane segment at 121-142 threads the bilayer; it reads MVYYMSTTIIAAVLGVILVLAI. Residues 143–235 lie on the Extracellular side of the membrane; sequence HPGNPKLKKQ…TKMVIKKGLE (93 aa). Residues N206 and N216 are each glycosylated (N-linked (GlcNAc...) asparagine). A helical membrane pass occupies residues 236 to 259; the sequence is FKDGMNVLGLIGFFIAFGIAMGKM. At 260 to 268 the chain is on the cytoplasmic side; that stretch reads GDQAKLMVD. A helical membrane pass occupies residues 269-296; it reads FFNILNEIVMKLVIMIMWYSPLGIACLI. The Extracellular portion of the chain corresponds to 297 to 317; that stretch reads CGKIIAIKDLEVVARQLGMYM. A helical membrane pass occupies residues 318 to 339; the sequence is VTVIIGLIIHGGIFLPLIYFVV. Residues 340–344 are Cytoplasmic-facing; sequence TRKNP. The discontinuously helical intramembrane region spans 345 to 375; it reads FSFFAGIFQAWITALGTASSAGTLPVTFRCL. 362 to 364 is an L-aspartate binding site; that stretch reads ASS. Residues 376 to 384 are Cytoplasmic-facing; the sequence is EENLGIDKR. A helical membrane pass occupies residues 385-411; it reads VTRFVLPVGATINMDGTALYEAVAAIF. The Na(+) site is built by G393, T395, and N397. T401 serves as a coordination point for L-aspartate. The Extracellular segment spans residues 412 to 424; that stretch reads IAQMNGVVLDGGQ. The discontinuously helical intramembrane region spans 425–458; the sequence is IVTVSLTATLASVGAASIPSAGLVTMLLILTAVG. An L-aspartate-binding site is contributed by 442-446; that stretch reads IPSAG. The Extracellular segment spans residues 459–471; sequence LPTEDISLLVAVD. A helical transmembrane segment spans residues 472–493; sequence WLLDRMRTSVNVVGDSFGAGIV. Residues D475 and N482 each coordinate L-aspartate. Residues N482 and D486 each contribute to the Na(+) site. Residues 494 to 574 lie on the Cytoplasmic side of the membrane; sequence YHLSKSELDT…VEEEPWKREK (81 aa). Phosphoserine occurs at positions 506, 521, 532, and 534. Y539 is subject to Phosphotyrosine. A phosphoserine mark is found at S544, S560, and S564.

The protein belongs to the dicarboxylate/amino acid:cation symporter (DAACS) (TC 2.A.23) family. SLC1A2 subfamily. In terms of assembly, homotrimer. Isoform 3 can oligomerize with isoform 1. Interacts with AJUBA. Glycosylated. Post-translationally, palmitoylation at Cys-38 is not required for correct subcellular localization, but is important for glutamate uptake activity.

It is found in the cell membrane. It carries out the reaction K(+)(in) + L-glutamate(out) + 3 Na(+)(out) + H(+)(out) = K(+)(out) + L-glutamate(in) + 3 Na(+)(in) + H(+)(in). It catalyses the reaction K(+)(in) + L-aspartate(out) + 3 Na(+)(out) + H(+)(out) = K(+)(out) + L-aspartate(in) + 3 Na(+)(in) + H(+)(in). The catalysed reaction is D-aspartate(out) + K(+)(in) + 3 Na(+)(out) + H(+)(out) = D-aspartate(in) + K(+)(out) + 3 Na(+)(in) + H(+)(in). In terms of biological role, sodium-dependent, high-affinity amino acid transporter that mediates the uptake of L-glutamate and also L-aspartate and D-aspartate. Functions as a symporter that transports one amino acid molecule together with two or three Na(+) ions and one proton, in parallel with the counter-transport of one K(+) ion. Mediates Cl(-) flux that is not coupled to amino acid transport; this avoids the accumulation of negative charges due to aspartate and Na(+) symport. Essential for the rapid removal of released glutamate from the synaptic cleft, and for terminating the postsynaptic action of glutamate. This chain is Excitatory amino acid transporter 2, found in Homo sapiens (Human).